Reading from the N-terminus, the 139-residue chain is ATP synthase epsilon chain (139 aa).

This sequence belongs to the ATPase epsilon chain family. As to quaternary structure, F-type ATPases have 2 components, CF(1) - the catalytic core - and CF(0) - the membrane proton channel. CF(1) has five subunits: alpha(3), beta(3), gamma(1), delta(1), epsilon(1). CF(0) has three main subunits: a, b and c.

The protein localises to the cell inner membrane. In terms of biological role, produces ATP from ADP in the presence of a proton gradient across the membrane. This chain is ATP synthase epsilon chain, found in Salmonella arizonae (strain ATCC BAA-731 / CDC346-86 / RSK2980).